Here is a 315-residue protein sequence, read N- to C-terminus: Ribosomal protein L11 methyltransferase (315 aa).

S-adenosyl-L-methionine contacts are provided by threonine 152, glycine 185, aspartate 207, and asparagine 249.

Belongs to the methyltransferase superfamily. PrmA family.

It is found in the cytoplasm. The enzyme catalyses L-lysyl-[protein] + 3 S-adenosyl-L-methionine = N(6),N(6),N(6)-trimethyl-L-lysyl-[protein] + 3 S-adenosyl-L-homocysteine + 3 H(+). Its function is as follows. Methylates ribosomal protein L11. This Geotalea uraniireducens (strain Rf4) (Geobacter uraniireducens) protein is Ribosomal protein L11 methyltransferase.